The chain runs to 204 residues: MQKFTTFTSIAIPLERANIDTDAIIPKQFLKSIKRSGFGVNLFDEWRYLDHGEVGMDNSKRPLNMDFVLNQAKYQGAKILLVRENFGCGSSREHAPWALEDYGFKAIIAPSFADIFYNNCFKNGILPIVQDNNIMDEFFTLSGEIMINLDAQSIHTNSKTYFFEIDIERKRRLINGLDDIGLTLQYTDDIKAFEKDYFNKYNWL.

Belongs to the LeuD family. LeuD type 1 subfamily. In terms of assembly, heterodimer of LeuC and LeuD.

It carries out the reaction (2R,3S)-3-isopropylmalate = (2S)-2-isopropylmalate. It participates in amino-acid biosynthesis; L-leucine biosynthesis; L-leucine from 3-methyl-2-oxobutanoate: step 2/4. Functionally, catalyzes the isomerization between 2-isopropylmalate and 3-isopropylmalate, via the formation of 2-isopropylmaleate. The chain is 3-isopropylmalate dehydratase small subunit from Ruthia magnifica subsp. Calyptogena magnifica.